Here is a 466-residue protein sequence, read N- to C-terminus: MSRISISEIYKDDIIVNTPITIFGWVRSRRSSKSGFSFITVYDGSCLNSVQVVADKTLSNYYKDILHLTIGCSVTITGILILSIGDKQKYEIKATKFQVLGWIKNPDTYPISAKKHSLEYLREVAHLRSRTNLIGVIVRIRHHIFQSLHKFLNKQGYYWIPTPIITGLNTEGTGEMFRVSTMDMRNIPKKINGSVDFKKDFFGKESFLTVSGQLNLEAYACSLSKVYTFGPTFRAENSNTSRHLAEFWMLEIESSFCNLDEILIFSEDMLKYICKSLLKYCINDIKFLKNYIDNDIINRLKKFLSVNFIRINYKDAIDILLNSKKKFDNVVSFGVDLNAEHERFLVEKHFKAPVVIINYPKELKAFYMRLNDDKKTVAAMDLLVPGIGELIGGSQREERISVLDLRLSELGLRKEDYWWYRDLRRYGTVHHSGFGMGFERLISYITGISNIRDIIPFPRTVKNADF.

The protein belongs to the class-II aminoacyl-tRNA synthetase family. As to quaternary structure, homodimer.

It localises to the cytoplasm. It carries out the reaction tRNA(Asn) + L-asparagine + ATP = L-asparaginyl-tRNA(Asn) + AMP + diphosphate + H(+). This is Asparagine--tRNA ligase from Buchnera aphidicola subsp. Schizaphis graminum (strain Sg).